An 86-amino-acid chain; its full sequence is Exodeoxyribonuclease 7 small subunit (86 aa).

This sequence belongs to the XseB family. Heterooligomer composed of large and small subunits.

It is found in the cytoplasm. It catalyses the reaction Exonucleolytic cleavage in either 5'- to 3'- or 3'- to 5'-direction to yield nucleoside 5'-phosphates.. Bidirectionally degrades single-stranded DNA into large acid-insoluble oligonucleotides, which are then degraded further into small acid-soluble oligonucleotides. This chain is Exodeoxyribonuclease 7 small subunit, found in Xanthomonas oryzae pv. oryzae (strain MAFF 311018).